The sequence spans 514 residues: JmjC domain-containing histone demethylation protein 1 (514 aa).

The segment at 4-62 adopts a PHD-type zinc-finger fold; sequence IDTCPICVESPLEDSTTFNNIAWLQCDICNQWFHASCLKIPKIEVNNLHSYHCEGCSKS. Positions 220 to 384 constitute a JmjC domain; the sequence is SDVDSFGKSF…MHLRIYEIEK (165 aa). T267 lines the substrate pocket. Fe cation-binding residues include H270 and D272. K287 provides a ligand contact to substrate. A Fe cation-binding site is contributed by H352. The span at 432–454 shows a compositional bias: basic and acidic residues; the sequence is KSEAHSRGEVHTKTETHAVKDEP. The disordered stretch occupies residues 432-456; sequence KSEAHSRGEVHTKTETHAVKDEPQP.

This sequence belongs to the JHDM1 histone demethylase family. Fe(2+) is required as a cofactor.

The protein resides in the nucleus. It catalyses the reaction N(6),N(6)-dimethyl-L-lysyl(36)-[histone H3] + 2 2-oxoglutarate + 2 O2 = L-lysyl(36)-[histone H3] + 2 formaldehyde + 2 succinate + 2 CO2. In terms of biological role, histone demethylase that specifically demethylates 'Lys-36' of histone H3, thereby playing a central role in histone code. The polypeptide is JmjC domain-containing histone demethylation protein 1 (JHD1) (Debaryomyces hansenii (strain ATCC 36239 / CBS 767 / BCRC 21394 / JCM 1990 / NBRC 0083 / IGC 2968) (Yeast)).